The chain runs to 976 residues: Poly(ADP-ribose) glycohydrolase (976 aa).

Met-1 carries the N-acetylmethionine modification. The segment at 1–69 is disordered; sequence MNAGPGCEPC…GRAGQHRGSA (69 aa). Positions 1 to 456 are A-domain; that stretch reads MNAGPGCEPC…LSPDKKWLGT (456 aa). The Nuclear localization signal signature appears at 10-16; sequence CTKRPRW. At Ser-22 the chain carries Phosphoserine. The segment covering 37 to 46 has biased composition (basic and acidic residues); sequence RVLDPKDAHV. Ser-68 is subject to Phosphoserine. The PIP-box (PCNA interacting peptide) signature appears at 76-83; it reads QKTITSWM. Phosphoserine is present on residues Ser-133 and Ser-137. Thr-139 is modified (phosphothreonine). The interval 183–350 is disordered; that stretch reads SNANIDRSPQ…PSRFQARDAD (168 aa). Basic and acidic residues-rich tracts occupy residues 191–206 and 222–233; these read PQND…ENRD and TTEDEQAREAKS. Ser-197 is modified (phosphoserine). Residue Thr-199 is modified to Phosphothreonine. Residues Ser-261, Ser-264, Ser-286, Ser-291, Ser-298, Ser-302, and Ser-316 each carry the phosphoserine modification. Positions 316–331 are enriched in acidic residues; it reads SEADEETSPGFDEQED. Residues 332–342 are compositionally biased toward polar residues; that stretch reads GSSSQTANKPS. Position 340 is an N6-acetyllysine (Lys-340). Ser-448 carries the post-translational modification Phosphoserine. Positions 610-795 are catalytic; the sequence is QPIPLLKQKM…TEQYSEYTGY (186 aa). 726 to 727 provides a ligand contact to substrate; the sequence is IE. The active site involves Asp-737. Positions 740 and 754 each coordinate substrate. Residues Glu-755 and Glu-756 contribute to the active site. Residues Tyr-795 and 869–874 each bind substrate; that span reads NWGCGA.

Belongs to the poly(ADP-ribose) glycohydrolase family. Interacts with PCNA. Interacts with NUDT5. In terms of tissue distribution, ubiquitously expressed.

It is found in the nucleus. The protein resides in the cytoplasm. It localises to the mitochondrion. The protein localises to the mitochondrion matrix. The enzyme catalyses [(1''-&gt;2')-ADP-alpha-D-ribose](n) + H2O = [(1''-&gt;2')-ADP-alpha-D-ribose](n-1) + ADP-D-ribose. Poly(ADP-ribose) glycohydrolase that degrades poly(ADP-ribose) by hydrolyzing the ribose-ribose bonds present in poly(ADP-ribose). PARG acts both as an endo- and exoglycosidase, releasing poly(ADP-ribose) of different length as well as ADP-ribose monomers. It is however unable to cleave the ester bond between the terminal ADP-ribose and ADP-ribosylated residues, leaving proteins that are mono-ADP-ribosylated. Poly(ADP-ribose) is synthesized after DNA damage is only present transiently and is rapidly degraded by PARG. Required to prevent detrimental accumulation of poly(ADP-ribose) upon prolonged replicative stress, while it is not required for recovery from transient replicative stress. Responsible for the prevalence of mono-ADP-ribosylated proteins in cells, thanks to its ability to degrade poly(ADP-ribose) without cleaving the terminal protein-ribose bond. Required for retinoid acid-dependent gene transactivation, probably by removing poly(ADP-ribose) from histone demethylase KDM4D, allowing chromatin derepression at RAR-dependent gene promoters. Involved in the synthesis of ATP in the nucleus, together with PARP1, NMNAT1 and NUDT5. Nuclear ATP generation is required for extensive chromatin remodeling events that are energy-consuming. The chain is Poly(ADP-ribose) glycohydrolase from Homo sapiens (Human).